Consider the following 783-residue polypeptide: MAAKAFPMVGDAANVSGGATSSREYHLNDSHHNILPLHSSSSSASPSSHLALLCDNAKMVRKRAASEMELQIGGGISEHGRFLRRNAPLLGDLRVCGTNFGGGAGGDNGGGNSLGVSVSHPNHVVVNNYSTMQIAPPPTSTNLSVTSTSDATHLAYMEQLPPNEPQAPLPLCVFSGLPLFPAPSRARNAAGAALQPAPLPVTASGSAIGVNSSSGGGMGDNGTAMAWIDGIIKDLIHISTHVSIPQLIQNVREIIHPCNPNLAALLEYRLRSLTTAAAAADPLAANVYDDWRRKETLQPQSQDAITHPLHLPDSMTPPPWEITLPPAAAAATTRHQLRDNNPSSLPFVPVPSSDRLDQQQQPGRMDNEKQPESQSQSQSPPASENTAAAALIRTESIMRREKEELEQQKKDEEGLHLLTLLLQCAEAVAADNLDEANRMLLQVSELSTPYGTSAQRVAAYFSEAMSARLVNSCLGIYASAPLNALPLSLNQKMASAFQVFNGISPFVKFSHFTANQAIQEAFEREDRVHIIDLDIMQGLQWPGLFHILASRPGGPPLVRLTGLGTSMEALEATGKRLSDFAQKLGLPFEFFPVADKVGNLDPQRLNVNKREAVAVHWLQHSLYDVTGSDTNTLWLLQRLAPKVVTVVEQDLSHAGSFLGRFVEAIHYYSALFDSLGACYGEESEERHAVEQQLLSREIRNVLAVGGPSRSGEVKFNNWREKFQQSGFRGVSLAGNAAAQATLLLGMFHSDGYTLAEDNGALKLGWKDLCLLTASAWRPPPLAQ.

The tract at residues 298-387 is disordered; that stretch reads QPQSQDAITH…QSPPASENTA (90 aa). Composition is skewed to low complexity over residues 342–353 and 372–384; these read PSSLPFVPVPSS and ESQS…PASE. A coiled-coil region spans residues 387-418; that stretch reads AAAALIRTESIMRREKEELEQQKKDEEGLHLL. A GRAS domain is found at 408–777; the sequence is QKKDEEGLHL…LCLLTASAWR (370 aa). Residues 415–478 are leucine repeat I (LRI); the sequence is LHLLTLLLQC…LVNSCLGIYA (64 aa). Positions 422–426 match the LxCxE motif motif; the sequence is LQCAE. The VHIID stretch occupies residues 497–562; the sequence is FQVFNGISPF…GGPPLVRLTG (66 aa). A VHIID motif is present at residues 528 to 532; sequence VHIID. The tract at residues 572–604 is leucine repeat II (LRII); it reads ATGKRLSDFAQKLGLPFEFFPVADKVGNLDPQR. Positions 613-700 are PFYRE; sequence VAVHWLQHSL…QQLLSREIRN (88 aa). The tract at residues 703 to 777 is SAW; it reads AVGGPSRSGE…LCLLTASAWR (75 aa).

Belongs to the GRAS family.

Its subcellular location is the nucleus. Its function is as follows. Putative transcription factor involved in asymmetric cell division. Required for differentiation of endodermis and graviresponses. The polypeptide is Protein SCARECROW (SCR) (Ipomoea nil (Japanese morning glory)).